We begin with the raw amino-acid sequence, 878 residues long: von Willebrand factor A domain-containing protein DDB_G0267758 (878 aa).

One can recognise a VIT domain in the interval 36–169; it reads GLFLTENNKK…TVKITLTITS (134 aa). Residues 316 to 496 enclose the VWFA domain; the sequence is EFIFLIDCSG…ISLKPMFSNI (181 aa). The span at 595-623 shows a compositional bias: low complexity; the sequence is SSSSSSSSSSSSSSSSSSSSSSSSSSSSS. 2 disordered regions span residues 595-638 and 752-774; these read SSSS…HRLS and SVKKSKKSETKEETTKTTSSKTK. Over residues 624–635 the composition is skewed to polar residues; that stretch reads TTTATTNQNQIH.

This chain is von Willebrand factor A domain-containing protein DDB_G0267758, found in Dictyostelium discoideum (Social amoeba).